Here is a 241-residue protein sequence, read N- to C-terminus: Orotidine 5'-phosphate decarboxylase (241 aa).

Substrate contacts are provided by residues D16, K37, 64-73 (DLKFHDIPTT), T128, R190, Q199, G219, and R220. Residue K66 is the Proton donor of the active site.

It belongs to the OMP decarboxylase family. Type 1 subfamily. In terms of assembly, homodimer.

The catalysed reaction is orotidine 5'-phosphate + H(+) = UMP + CO2. It functions in the pathway pyrimidine metabolism; UMP biosynthesis via de novo pathway; UMP from orotate: step 2/2. Functionally, catalyzes the decarboxylation of orotidine 5'-monophosphate (OMP) to uridine 5'-monophosphate (UMP). The sequence is that of Orotidine 5'-phosphate decarboxylase from Prochlorococcus marinus (strain NATL1A).